A 311-amino-acid polypeptide reads, in one-letter code: MRTEKIDKSIHNASLATPKQAFSQVLSETLKTGIIKSNLLAMAAGLSLALYVTGIPIGEKLPEILFAIFGSAFVIGAAGAFNNIYDRDIDAIMDRTKNRPTVTGRMQPANALVLGISLSLLGLLLLGVASPRAALFGFLGLFLYVVPYTMWSKRRTIYNTEIGSVGGAVPPLIGWAAISGDLVHPAIIGLFVVTVLWQMPHFYAIAIRRYDEYKAAKVPMLPVVKGFKRTFIQTNVYLVVLAASSFFFVSLSWFITIVALVLSLIWLTLSIAGYKRMEPKKWATLMFVFSLNYLTILFTVIIGFSLLSPLF.

8 consecutive transmembrane segments (helical) span residues 39 to 59 (LLAM…PIGE), 61 to 81 (LPEI…AGAF), 111 to 131 (ALVL…VASP), 133 to 153 (AALF…MWSK), 162 to 182 (IGSV…SGDL), 187 to 207 (IIGL…AIAI), 246 to 266 (FFFV…SLIW), and 287 to 307 (FVFS…FSLL).

It belongs to the UbiA prenyltransferase family. Protoheme IX farnesyltransferase subfamily. Interacts with CtaA.

The protein localises to the cell membrane. It catalyses the reaction heme b + (2E,6E)-farnesyl diphosphate + H2O = Fe(II)-heme o + diphosphate. Its pathway is porphyrin-containing compound metabolism; heme O biosynthesis; heme O from protoheme: step 1/1. Functionally, converts heme B (protoheme IX) to heme O by substitution of the vinyl group on carbon 2 of heme B porphyrin ring with a hydroxyethyl farnesyl side group. This chain is Protoheme IX farnesyltransferase, found in Shouchella clausii (strain KSM-K16) (Alkalihalobacillus clausii).